We begin with the raw amino-acid sequence, 237 residues long: MFTTSLRQAQRIVVFTGAGMSTESGVPDFRSSRGLCKGNNPEALASLQAMNDNREAFVDFYRRRMEQLQHVQPHKGYDVLATWEQQLSVTAIITQNTDGLHERAGNQRVLPLHGSIQKLYCIQCGQHYDVDRYMNNQPSCSCGGFIRPSVVLFGEPLDSNILALAEQHSIEADVFIVLGSSLVVSPANLFPRIAKEHGAKLIIVNHDSTPLDTIADYVVNDKPIGSFLVETNRALQK.

Residues 1–237 (MFTTSLRQAQ…LVETNRALQK (237 aa)) enclose the Deacetylase sirtuin-type domain. Residues A18, T22, F29, R30, Q95, D98, and H113 each contribute to the NAD(+) site. Nicotinamide is bound at residue F29. D98 serves as a coordination point for nicotinamide. Residue H113 is the Proton acceptor of the active site. Zn(2+)-binding residues include C121, C124, C140, and C142. NAD(+)-binding residues include S180, S181, N205, and I224.

It belongs to the sirtuin family. Class U subfamily. Zn(2+) is required as a cofactor.

It is found in the cytoplasm. The enzyme catalyses N(6)-acetyl-L-lysyl-[protein] + NAD(+) + H2O = 2''-O-acetyl-ADP-D-ribose + nicotinamide + L-lysyl-[protein]. Functionally, NAD-dependent protein deacetylase which modulates the activities of several enzymes which are inactive in their acetylated form. This is NAD-dependent protein deacetylase from Shouchella clausii (strain KSM-K16) (Alkalihalobacillus clausii).